A 463-amino-acid chain; its full sequence is Siroheme synthase 1 (463 aa).

The tract at residues Met1–Val203 is precorrin-2 dehydrogenase /sirohydrochlorin ferrochelatase. NAD(+) contacts are provided by residues Glu22 to Val23 and Pro43 to His44. Ser128 is subject to Phosphoserine. The tract at residues Gly215 to Val463 is uroporphyrinogen-III C-methyltransferase. S-adenosyl-L-methionine is bound at residue Pro224. The active-site Proton acceptor is Asp247. Lys269 acts as the Proton donor in catalysis. Residues Gly300–Asp302, Ile305, Thr330–Ala331, Met382, and Gly411 each bind S-adenosyl-L-methionine.

The protein in the N-terminal section; belongs to the precorrin-2 dehydrogenase / sirohydrochlorin ferrochelatase family. It in the C-terminal section; belongs to the precorrin methyltransferase family.

It carries out the reaction uroporphyrinogen III + 2 S-adenosyl-L-methionine = precorrin-2 + 2 S-adenosyl-L-homocysteine + H(+). The enzyme catalyses precorrin-2 + NAD(+) = sirohydrochlorin + NADH + 2 H(+). The catalysed reaction is siroheme + 2 H(+) = sirohydrochlorin + Fe(2+). It participates in cofactor biosynthesis; adenosylcobalamin biosynthesis; precorrin-2 from uroporphyrinogen III: step 1/1. It functions in the pathway cofactor biosynthesis; adenosylcobalamin biosynthesis; sirohydrochlorin from precorrin-2: step 1/1. The protein operates within porphyrin-containing compound metabolism; siroheme biosynthesis; precorrin-2 from uroporphyrinogen III: step 1/1. Its pathway is porphyrin-containing compound metabolism; siroheme biosynthesis; siroheme from sirohydrochlorin: step 1/1. It participates in porphyrin-containing compound metabolism; siroheme biosynthesis; sirohydrochlorin from precorrin-2: step 1/1. In terms of biological role, multifunctional enzyme that catalyzes the SAM-dependent methylations of uroporphyrinogen III at position C-2 and C-7 to form precorrin-2 via precorrin-1. Then it catalyzes the NAD-dependent ring dehydrogenation of precorrin-2 to yield sirohydrochlorin. Finally, it catalyzes the ferrochelation of sirohydrochlorin to yield siroheme. The protein is Siroheme synthase 1 of Aeromonas hydrophila subsp. hydrophila (strain ATCC 7966 / DSM 30187 / BCRC 13018 / CCUG 14551 / JCM 1027 / KCTC 2358 / NCIMB 9240 / NCTC 8049).